The primary structure comprises 391 residues: Formate-dependent phosphoribosylglycinamide formyltransferase (391 aa).

N(1)-(5-phospho-beta-D-ribosyl)glycinamide is bound by residues 20-21 (EL) and Glu-80. Residues Arg-112, Lys-153, 158–163 (SSGKGQ), 193–196 (EGFV), and Glu-201 contribute to the ATP site. The ATP-grasp domain occupies 117 to 306 (RLAAETLGLP…EFALHVRAIL (190 aa)). Positions 265 and 277 each coordinate Mg(2+). N(1)-(5-phospho-beta-D-ribosyl)glycinamide contacts are provided by residues Asp-284, Lys-354, and 361–362 (RR).

Belongs to the PurK/PurT family. Homodimer.

It carries out the reaction N(1)-(5-phospho-beta-D-ribosyl)glycinamide + formate + ATP = N(2)-formyl-N(1)-(5-phospho-beta-D-ribosyl)glycinamide + ADP + phosphate + H(+). Its pathway is purine metabolism; IMP biosynthesis via de novo pathway; N(2)-formyl-N(1)-(5-phospho-D-ribosyl)glycinamide from N(1)-(5-phospho-D-ribosyl)glycinamide (formate route): step 1/1. In terms of biological role, involved in the de novo purine biosynthesis. Catalyzes the transfer of formate to 5-phospho-ribosyl-glycinamide (GAR), producing 5-phospho-ribosyl-N-formylglycinamide (FGAR). Formate is provided by PurU via hydrolysis of 10-formyl-tetrahydrofolate. In Shewanella sp. (strain W3-18-1), this protein is Formate-dependent phosphoribosylglycinamide formyltransferase.